Consider the following 785-residue polypeptide: Endonuclease MutS2 (785 aa).

Gly335–Thr342 serves as a coordination point for ATP. Residues Leu710–Lys785 enclose the Smr domain.

The protein belongs to the DNA mismatch repair MutS family. MutS2 subfamily. As to quaternary structure, homodimer. Binds to stalled ribosomes, contacting rRNA.

In terms of biological role, endonuclease that is involved in the suppression of homologous recombination and thus may have a key role in the control of bacterial genetic diversity. Functionally, acts as a ribosome collision sensor, splitting the ribosome into its 2 subunits. Detects stalled/collided 70S ribosomes which it binds and splits by an ATP-hydrolysis driven conformational change. Acts upstream of the ribosome quality control system (RQC), a ribosome-associated complex that mediates the extraction of incompletely synthesized nascent chains from stalled ribosomes and their subsequent degradation. Probably generates substrates for RQC. This chain is Endonuclease MutS2, found in Listeria monocytogenes serovar 1/2a (strain ATCC BAA-679 / EGD-e).